Consider the following 549-residue polypeptide: Hydroxylamine reductase (549 aa).

[4Fe-4S] cluster contacts are provided by C5, C8, C17, and C23. Residues H242, E266, C310, C402, C430, C455, E490, and K492 each contribute to the hybrid [4Fe-2O-2S] cluster site. Position 402 is a cysteine persulfide (C402).

Belongs to the HCP family. Requires [4Fe-4S] cluster as cofactor. Hybrid [4Fe-2O-2S] cluster serves as cofactor.

It localises to the cytoplasm. The catalysed reaction is A + NH4(+) + H2O = hydroxylamine + AH2 + H(+). Functionally, catalyzes the reduction of hydroxylamine to form NH(3) and H(2)O. The polypeptide is Hydroxylamine reductase (Clostridium novyi (strain NT)).